Consider the following 924-residue polypeptide: DNA repair and recombination protein RDH54 (924 aa).

Residues 1–10 (MQIPKYENKP) are compositionally biased toward basic and acidic residues. Disordered stretches follow at residues 1–21 (MQIPKYENKPFKPPRRVGSNK) and 155–183 (EALSQNMGNPSPPTTSTTETVPSTKNDGG). Over residues 168 to 178 (TTSTTETVPST) the composition is skewed to low complexity. In terms of domain architecture, Helicase ATP-binding spans 299–487 (LENDSDISGC…FTIIDFINPG (189 aa)). 346–353 (IPLTGLCK) serves as a coordination point for ATP. Residues 472-475 (NDLN) carry the DEGH box motif. Residue Lys615 forms a Glycyl lysine isopeptide (Lys-Gly) (interchain with G-Cter in ubiquitin) linkage. One can recognise a Helicase C-terminal domain in the interval 631–790 (KLKVLMTLLE…DSEMRNKESS (160 aa)).

The protein belongs to the SNF2/RAD54 helicase family. In terms of assembly, interacts with RAD51 and DMC1.

It localises to the nucleus. The enzyme catalyses ATP + H2O = ADP + phosphate + H(+). In terms of biological role, involved in the recombinational repair of double-strand breaks (DSB) in DNA during mitosis and meiosis. Has DNA dependent ATPase activity. Promotes D-loop (displacement loop) formation with RAD51 recombinase. Modifies the topology of double-stranded DNA during the D-loop reaction to facilitate the invasion of the homologous duplex molecule by the initiating single-stranded DNA substrate. Required for adaptation from G2/M checkpoint arrest induced by a double strand break, by participating in monitoring the extent of single-stranded DNA produced by resection of DNA ends. This role is distinct from its roles in recombination. Promotes colocalization of RAD51 and DMC1 during meiotic recombination. Involved in crossover interference. In Saccharomyces cerevisiae (strain JAY291) (Baker's yeast), this protein is DNA repair and recombination protein RDH54 (RDH54).